An 859-amino-acid chain; its full sequence is Photoactivated adenylate cyclase subunit beta-like protein FB (859 aa).

The region spanning 56–149 (LRRLMYLSKS…GRMYGDWHMK (94 aa)) is the BLUF 1 domain. One can recognise a Guanylate cyclase 1 domain in the interval 205-333 (VVTFIYLVEF…DCINTTSRIA (129 aa)). The segment at 414–449 (GLPNSQRPPIFDDTPKANRRPRTPGYGGRQRSDSQV) is disordered. A BLUF 2 domain is found at 471-563 (LTTLTYISQA…RVYPSEWTLT (93 aa)). The Guanylate cyclase 2 domain maps to 619–748 (VMLATDICSF…AVSARVMEVE (130 aa)). Residues 813 to 859 (AARSGEKPLTEPEAAKPDFRVSPGRVRHGDSGRRSNSAQGKRSIQVR) form a disordered region. The segment covering 815–831 (RSGEKPLTEPEAAKPDF) has biased composition (basic and acidic residues). The segment covering 846–859 (RSNSAQGKRSIQVR) has biased composition (polar residues).

This sequence belongs to the adenylyl cyclase class-4/guanylyl cyclase family. As to quaternary structure, heterotetramer of two alpha and two beta subunits.

Its subcellular location is the cell projection. The protein localises to the cilium. It localises to the flagellum. In Euglena gracilis, this protein is Photoactivated adenylate cyclase subunit beta-like protein FB.